We begin with the raw amino-acid sequence, 223 residues long: Rho-related protein racE (223 aa).

18 to 25 (GDGAVGKT) contributes to the GTP binding site. The Effector region signature appears at 40–48 (YVPTVFENY). Residues 65 to 69 (DTAGQ) and 123 to 126 (TKID) contribute to the GTP site. Residues 187-223 (GMDKKSQDGSSSASGVPSGDKPTKGKAGKKKSGCIIL) form a disordered region. Residues 210–223 (KGKAGKKKSGCIIL) show a composition bias toward basic residues. Cysteine methyl ester is present on Cys-220. Cys-220 carries S-geranylgeranyl cysteine lipidation. A propeptide spans 221 to 223 (IIL) (removed in mature form).

It belongs to the small GTPase superfamily. Rho family. Interacts with rgaA.

The protein resides in the cell membrane. Its function is as follows. Specifically required for cytokinesis. This chain is Rho-related protein racE (racE), found in Dictyostelium discoideum (Social amoeba).